A 444-amino-acid chain; its full sequence is Tol-Pal system protein TolB (444 aa).

The first 26 residues, 1 to 26 (MNLFRSLAPMGLALALLLPAAAPALA), serve as a signal peptide directing secretion. A compositionally biased stretch (polar residues) spans 287 to 310 (ASGTRRQLTNSPSIETAPSYSPDG). The interval 287–311 (ASGTRRQLTNSPSIETAPSYSPDGS) is disordered.

It belongs to the TolB family. The Tol-Pal system is composed of five core proteins: the inner membrane proteins TolA, TolQ and TolR, the periplasmic protein TolB and the outer membrane protein Pal. They form a network linking the inner and outer membranes and the peptidoglycan layer.

It is found in the periplasm. Part of the Tol-Pal system, which plays a role in outer membrane invagination during cell division and is important for maintaining outer membrane integrity. The sequence is that of Tol-Pal system protein TolB from Cereibacter sphaeroides (strain ATCC 17025 / ATH 2.4.3) (Rhodobacter sphaeroides).